Reading from the N-terminus, the 837-residue chain is Periplasmic nitrate reductase (837 aa).

Positions 1–32 (MTSPKLDRRQMLKLEAAAIAAAAAGLPVPALA) form a signal peptide, tat-type signal. The 4Fe-4S Mo/W bis-MGD-type domain maps to 44 to 100 (LKWDKAACRFCGTGCSVMVATKENRVVATHGDIKAEVNRGLNCVKGYFLSKIMYGHD). [4Fe-4S] cluster is bound by residues Cys51, Cys54, Cys58, and Cys86. Residues Lys88, Gln155, Asn180, Cys184, 217 to 224 (WGSNMAEM), 248 to 252 (STFEH), 267 to 269 (QTD), Met378, Gln382, Asn488, 514 to 515 (SD), Lys537, Asp564, and 724 to 733 (TGRVLEHWHS) contribute to the Mo-bis(molybdopterin guanine dinucleotide) site. Trp800 serves as a coordination point for substrate. Mo-bis(molybdopterin guanine dinucleotide) is bound by residues Asn808 and Lys825.

Belongs to the prokaryotic molybdopterin-containing oxidoreductase family. NasA/NapA/NarB subfamily. In terms of assembly, component of the periplasmic nitrate reductase NapAB complex composed of NapA and NapB. Requires [4Fe-4S] cluster as cofactor. Mo-bis(molybdopterin guanine dinucleotide) serves as cofactor. Post-translationally, predicted to be exported by the Tat system. The position of the signal peptide cleavage has not been experimentally proven.

Its subcellular location is the periplasm. The catalysed reaction is 2 Fe(II)-[cytochrome] + nitrate + 2 H(+) = 2 Fe(III)-[cytochrome] + nitrite + H2O. Functionally, catalytic subunit of the periplasmic nitrate reductase complex NapAB. Receives electrons from NapB and catalyzes the reduction of nitrate to nitrite. The chain is Periplasmic nitrate reductase from Bradyrhizobium diazoefficiens (strain JCM 10833 / BCRC 13528 / IAM 13628 / NBRC 14792 / USDA 110).